The sequence spans 106 residues: Late cornified envelope protein 2A (106 aa).

Residues 1 to 10 are compositionally biased toward low complexity; the sequence is MSCQQNQQQC. Positions 1-25 are disordered; that stretch reads MSCQQNQQQCQPPPKCPPKCPPKCP. The span at 11-25 shows a compositional bias: pro residues; the sequence is QPPPKCPPKCPPKCP.

The protein belongs to the LCE family. In terms of assembly, interacts with CYSRT1. Skin-specific. Expression was readily detected in adult trunk skin, adult arm skin, fetal skin, penal skin, vulva, esophagus and tongue. Not expressed in the cervix, rectum, lung, colon, or placenta.

In terms of biological role, precursors of the cornified envelope of the stratum corneum. The protein is Late cornified envelope protein 2A (LCE2A) of Homo sapiens (Human).